The sequence spans 163 residues: UPF0478 protein SAB1599c (163 aa).

Residues 7-27 (IAGIIAAIAFLILCIGIVAVL) form a helical membrane-spanning segment.

Belongs to the UPF0478 family.

It localises to the cell membrane. This chain is UPF0478 protein SAB1599c, found in Staphylococcus aureus (strain bovine RF122 / ET3-1).